Reading from the N-terminus, the 535-residue chain is Inositol 1,4,5-trisphosphate receptor-interacting protein-like 2 (535 aa).

A signal peptide spans 1-38; the sequence is MSVHYTLNLRVFWPLVTGLCTALVCLYHVLRGSGGARA. The Extracellular segment spans residues 39–43; the sequence is EPADG. A helical membrane pass occupies residues 44-64; the sequence is VDGGFPLLKVAVLLLLSYVLL. Residues 65–535 lie on the Cytoplasmic side of the membrane; sequence RCRHAVRQRF…RTQGFLEGEP (471 aa). Ser139 carries the post-translational modification Phosphoserine.

Belongs to the ITPRIP family.

The protein resides in the membrane. This chain is Inositol 1,4,5-trisphosphate receptor-interacting protein-like 2 (ITPRIPL2), found in Homo sapiens (Human).